Reading from the N-terminus, the 143-residue chain is Large ribosomal subunit protein uL15 (143 aa).

The tract at residues 1–51 (MELNTIKPASGAKHAKRRVGRGIGSGLGKTAGRGHKGQKSRAGGYHKVGFE) is disordered. The span at 21–31 (RGIGSGLGKTA) shows a compositional bias: gly residues.

The protein belongs to the universal ribosomal protein uL15 family. In terms of assembly, part of the 50S ribosomal subunit.

Functionally, binds to the 23S rRNA. In Methylibium petroleiphilum (strain ATCC BAA-1232 / LMG 22953 / PM1), this protein is Large ribosomal subunit protein uL15.